Consider the following 325-residue polypeptide: Putative carboxypeptidase YocD (325 aa).

Catalysis depends on S111, which acts as the Nucleophile. Active-site charge relay system residues include E228 and H296.

Belongs to the peptidase S66 family.

This chain is Putative carboxypeptidase YocD (yocD), found in Bacillus subtilis (strain 168).